The sequence spans 896 residues: Alanine--tRNA ligase (896 aa).

The Zn(2+) site is built by H574, H578, C677, and H681.

It belongs to the class-II aminoacyl-tRNA synthetase family. It depends on Zn(2+) as a cofactor.

Its subcellular location is the cytoplasm. The catalysed reaction is tRNA(Ala) + L-alanine + ATP = L-alanyl-tRNA(Ala) + AMP + diphosphate. Functionally, catalyzes the attachment of alanine to tRNA(Ala) in a two-step reaction: alanine is first activated by ATP to form Ala-AMP and then transferred to the acceptor end of tRNA(Ala). Also edits incorrectly charged Ser-tRNA(Ala) and Gly-tRNA(Ala) via its editing domain. In Mycoplasma mycoides subsp. mycoides SC (strain CCUG 32753 / NCTC 10114 / PG1), this protein is Alanine--tRNA ligase.